Here is a 125-residue protein sequence, read N- to C-terminus: Succinate dehydrogenase cytochrome b560 subunit (125 aa).

The next 3 helical transmembrane spans lie at 29 to 49, 68 to 88, and 104 to 124; these read ISGV…KLAT, ILPW…INGI, and IIKD…FKFI. Residue His83 coordinates heme.

This sequence belongs to the cytochrome b560 family. Forms part of complex II containing four subunits: a 70 kDa flavoprotein (FP), a 27 kDa iron-sulfur protein (IP), a cytochrome B and a membrane-anchoring protein. The cofactor is heme.

The protein localises to the mitochondrion inner membrane. It participates in carbohydrate metabolism; tricarboxylic acid cycle. Its function is as follows. Membrane-anchoring subunit of succinate dehydrogenase (SDH) that is involved in complex II of the mitochondrial electron transport chain and is responsible for transferring electrons from succinate to ubiquinone (coenzyme Q). The sequence is that of Succinate dehydrogenase cytochrome b560 subunit (SDH3) from Porphyra purpurea (Red seaweed).